We begin with the raw amino-acid sequence, 307 residues long: Cyclooctat-9-en-7-ol synthase (307 aa).

Positions 110, 220, 224, and 228 each coordinate Mg(2+). The DDXXD motif; degenerate signature appears at Asp110–Asp113. The NSE/DTE motif signature appears at Asn220–Glu228.

Belongs to the terpene synthase family. As to quaternary structure, homodimer. Requires Mg(2+) as cofactor.

The catalysed reaction is geranylgeranyl diphosphate + H2O = cyclooctat-9-en-7-ol + diphosphate. Its function is as follows. Catalyzes the cyclization of the linear isoprenoid intermediate geranylgeranyl diphosphate to tricycclic cyclooctat-9-en-7-ol in the cyclooctatin biosynthesis pathway. Cyclooctatin is a potent inhibitor of lysophospholipase. The protein is Cyclooctat-9-en-7-ol synthase of Streptomyces melanosporofaciens.